A 391-amino-acid chain; its full sequence is 3-ketoacyl-CoA thiolase (391 aa).

The active-site Acyl-thioester intermediate is cysteine 95. Active-site proton acceptor residues include histidine 347 and cysteine 377.

The protein belongs to the thiolase-like superfamily. Thiolase family. Heterotetramer of two alpha chains (FadB) and two beta chains (FadA).

It localises to the cytoplasm. The catalysed reaction is an acyl-CoA + acetyl-CoA = a 3-oxoacyl-CoA + CoA. It participates in lipid metabolism; fatty acid beta-oxidation. In terms of biological role, catalyzes the final step of fatty acid oxidation in which acetyl-CoA is released and the CoA ester of a fatty acid two carbons shorter is formed. This chain is 3-ketoacyl-CoA thiolase, found in Pseudomonas putida (strain ATCC 47054 / DSM 6125 / CFBP 8728 / NCIMB 11950 / KT2440).